A 419-amino-acid chain; its full sequence is MQPSKVNKHRIIFHIDMNCFYASVEMAHNPSLKGKPLAIAGNPEERKGIIVTSSYEARGKGVKTTMPIWQAKKLCPDLILMRPNFDRYRAASREIFKMLAEITPYVQPVSIDEGYMDITDTIYAKDPLVTANQLQQRILSGLDIPCSIGIAPNKFLAKMASDMKKPLGITVLRKREVEKLLWPMSVEEMYGIGEKTAQKLNSIEIKTIGDLAKKNVYELKQLLGVNGERLQNRANGIDNRLVDPEAVHDFKSIGSSQTLPHDSTDVTELMQLIHELVDNVERRVKRKEAAGKTVQITIRYHDRKTITRSKKLYNYIDNHREILFVAKELFEQHWNEAPVRLLGVSLQDMETKRNIGEQLDLFTYEAIEKKEKLKVTVDKLTKKYGSNIITSQKNKNESQENQQPRTSFQKDFLDDYKKP.

The UmuC domain maps to 12–193; sequence IFHIDMNCFY…MSVEEMYGIG (182 aa). Residues Asp-16 and Asp-112 each coordinate Mg(2+). Glu-113 is an active-site residue. The disordered stretch occupies residues 388-419; that stretch reads IITSQKNKNESQENQQPRTSFQKDFLDDYKKP.

Belongs to the DNA polymerase type-Y family. In terms of assembly, monomer. Mg(2+) serves as cofactor.

It is found in the cytoplasm. It carries out the reaction DNA(n) + a 2'-deoxyribonucleoside 5'-triphosphate = DNA(n+1) + diphosphate. Poorly processive, error-prone DNA polymerase involved in untargeted mutagenesis. Copies undamaged DNA at stalled replication forks, which arise in vivo from mismatched or misaligned primer ends. These misaligned primers can be extended by PolIV. Exhibits no 3'-5' exonuclease (proofreading) activity. May be involved in translesional synthesis, in conjunction with the beta clamp from PolIII. The sequence is that of DNA polymerase IV from Oceanobacillus iheyensis (strain DSM 14371 / CIP 107618 / JCM 11309 / KCTC 3954 / HTE831).